A 212-amino-acid polypeptide reads, in one-letter code: Bilin biosynthesis protein PecF (212 aa).

Belongs to the CpcE/RpcE/PecE family.

In terms of biological role, an enzyme involved in the biosynthesis of bilin. This chain is Bilin biosynthesis protein PecF (pecF), found in Mastigocladus laminosus (Fischerella sp.).